The chain runs to 347 residues: MDMSEINFSLDYAGVRGELRHDQPMKNYTSWRAGGSAERIYLPGDLPDLAAFLRGLPWNEPVYVMGLGSNLLVRDGGVRGSVVVLHARLNGLQLESDMGQMLIYAGAGVACAKVARFAALQGLGGAEFLAGIPGTVGGALAMNAGCYGTETWDIVSSVQTIDRLGILRRRPPGNYEIGYRHVALKAEKSSGSQKMGARENAPDDSLTDEWFSGAWFALPRDHAAAVRQKIKELLARRIHTQPLNLPNAGSVFRNPENDKAARLIESCGLKEFRIGGAMVSPRHANFIVNTGGATASDIEAVIAAVRETVKKQTGVELKQEVRIIGTPARPELHVSRTAYRKDGGYGG.

An FAD-binding PCMH-type domain is found at 33 to 221 (AGGSAERIYL…SGAWFALPRD (189 aa)). The active site involves Arg-180. Ser-250 (proton donor) is an active-site residue. Glu-320 is an active-site residue.

Belongs to the MurB family. FAD serves as cofactor.

The protein localises to the cytoplasm. It carries out the reaction UDP-N-acetyl-alpha-D-muramate + NADP(+) = UDP-N-acetyl-3-O-(1-carboxyvinyl)-alpha-D-glucosamine + NADPH + H(+). Its pathway is cell wall biogenesis; peptidoglycan biosynthesis. Cell wall formation. The chain is UDP-N-acetylenolpyruvoylglucosamine reductase from Nitrosospira multiformis (strain ATCC 25196 / NCIMB 11849 / C 71).